Reading from the N-terminus, the 507-residue chain is Fatty acid resistance protein FarB (507 aa).

The next 14 helical transmembrane spans lie at 8–28, 52–72, 78–98, 109–129, 136–156, 164–184, 199–219, 233–253, 274–294, 303–323, 334–354, 363–383, 399–419, and 478–498; these read GAALAWVTLSLGLAVFMEVLD, WVITSFSVANAVSVPLTGFLA, VKLFTAAAAGFVIASWLCGIA, ILQGFIAGPLIPLSQSLLMAS, MLALALWAMTVVVAPVLGPIL, WHWGWIFFINIPIGIISAWIT, PTDYVGLTLMMVGIGALQMML, IITLGITALVCLSYFIVWELG, IATSLGFMVYMGTLTLLPLVL, AWAGLAAAPVGILPVFLSPLI, LLVTASFLTFAFTFYWRTDFY, IWPQFWQGVGVAMFFLPLTTI, LSNFLRVLMGGVGVSVVSTLW, and IFLAGSILFIVLIPIVWLAKP.

It belongs to the major facilitator superfamily. EmrB family. As to quaternary structure, probably part of a tripartite efflux system FarAB-MtrE, which is composed of an inner membrane transporter, FarB, a periplasmic membrane fusion protein, FarA, and an outer membrane component, MtrE.

The protein resides in the cell inner membrane. Functionally, mediates resistance to long-chained antibacterial fatty acids (FAs). Function is dependent on the MtrE outer membrane protein. This is Fatty acid resistance protein FarB from Neisseria gonorrhoeae.